Consider the following 98-residue polypeptide: NADH-ubiquinone oxidoreductase chain 4L (98 aa).

3 helical membrane-spanning segments follow: residues 1 to 21 (MSLV…GLLM), 29 to 49 (SLLC…LTIL), and 61 to 81 (IILL…LVMV).

The protein belongs to the complex I subunit 4L family. Core subunit of respiratory chain NADH dehydrogenase (Complex I) which is composed of 45 different subunits.

Its subcellular location is the mitochondrion inner membrane. It carries out the reaction a ubiquinone + NADH + 5 H(+)(in) = a ubiquinol + NAD(+) + 4 H(+)(out). Functionally, core subunit of the mitochondrial membrane respiratory chain NADH dehydrogenase (Complex I) which catalyzes electron transfer from NADH through the respiratory chain, using ubiquinone as an electron acceptor. Part of the enzyme membrane arm which is embedded in the lipid bilayer and involved in proton translocation. The polypeptide is NADH-ubiquinone oxidoreductase chain 4L (MT-ND4L) (Elaphodus cephalophus (Tufted deer)).